Consider the following 397-residue polypeptide: Protein shisa-8 (397 aa).

The signal sequence occupies residues 1-38; the sequence is MARAGARGLLGGRRPPGLRLALALRLALLLARPPSGRA. At 39-138 the chain is on the extracellular side; it reads GAPEAQGPAA…APRDPGRERS (100 aa). Asparagine 75 carries an N-linked (GlcNAc...) asparagine glycan. The segment at 117–136 is disordered; the sequence is TGRPPARARDTAAPRDPGRE. Over residues 123–136 the composition is skewed to basic and acidic residues; sequence RARDTAAPRDPGRE. The helical transmembrane segment at 139-159 threads the bilayer; sequence HTAVYAVCGVAALLVLAGIGA. Over 160–397 the chain is Cytoplasmic; the sequence is RLGLERAHSP…RTNSKTEVTV (238 aa). Disordered regions lie at residues 182–250 and 281–303; these read LLKQ…GGSL and FPALEPSPRQPPARAPRPSPDLP. Composition is skewed to pro residues over residues 188 to 197 and 288 to 303; these read PQEPLPPTLG and PRQPPARAPRPSPDLP.

The protein belongs to the shisa family. In terms of assembly, interacts with AMPAR subunits GRIA1 and GRIA2.

It is found in the membrane. In terms of biological role, may regulate trafficking and current kinetics of AMPA-type glutamate receptor (AMPAR) at synapses. This Homo sapiens (Human) protein is Protein shisa-8.